The sequence spans 619 residues: DNA mismatch repair protein MutL (619 aa).

It belongs to the DNA mismatch repair MutL/HexB family.

In terms of biological role, this protein is involved in the repair of mismatches in DNA. It is required for dam-dependent methyl-directed DNA mismatch repair. May act as a 'molecular matchmaker', a protein that promotes the formation of a stable complex between two or more DNA-binding proteins in an ATP-dependent manner without itself being part of a final effector complex. This is DNA mismatch repair protein MutL from Xylella fastidiosa (strain M23).